A 695-amino-acid chain; its full sequence is UvrABC system protein B (695 aa).

In terms of domain architecture, Helicase ATP-binding spans 25–176 (KSISEGHRFQ…NQRDVLRDLA (152 aa)). 38–45 (GATGTGKT) lines the ATP pocket. The Beta-hairpin motif lies at 91–114 (YYDYYQPEAYVPSTDTYIAKSSSI). The Helicase C-terminal domain maps to 454–617 (LLGEIYLRLE…ITPKPIVKKN (164 aa)). Residues 652-687 (PELIGQLELKMKEAAKNLEFEEAAQLRDRIKKLRQR) enclose the UVR domain.

It belongs to the UvrB family. In terms of assembly, forms a heterotetramer with UvrA during the search for lesions. Interacts with UvrC in an incision complex.

It is found in the cytoplasm. Its function is as follows. The UvrABC repair system catalyzes the recognition and processing of DNA lesions. A damage recognition complex composed of 2 UvrA and 2 UvrB subunits scans DNA for abnormalities. Upon binding of the UvrA(2)B(2) complex to a putative damaged site, the DNA wraps around one UvrB monomer. DNA wrap is dependent on ATP binding by UvrB and probably causes local melting of the DNA helix, facilitating insertion of UvrB beta-hairpin between the DNA strands. Then UvrB probes one DNA strand for the presence of a lesion. If a lesion is found the UvrA subunits dissociate and the UvrB-DNA preincision complex is formed. This complex is subsequently bound by UvrC and the second UvrB is released. If no lesion is found, the DNA wraps around the other UvrB subunit that will check the other stand for damage. The sequence is that of UvrABC system protein B from Synechococcus sp. (strain JA-2-3B'a(2-13)) (Cyanobacteria bacterium Yellowstone B-Prime).